The following is a 917-amino-acid chain: Isoleucine--tRNA ligase (917 aa).

The L-isoleucyl-5'-AMP site is built by P56, H67, E554, G555, D557, Q558, and H585. A 'HIGH' region motif is present at residues 57-67; that stretch reads PYANGNLHMGH. The short motif at 595-599 is the 'KMSKS' region element; it reads KMSKS. K598 provides a ligand contact to ATP. TRNA(Ile) contacts are provided by R632 and Q640. C886, C889, C906, and C909 together coordinate Zn(2+).

The protein belongs to the class-I aminoacyl-tRNA synthetase family. IleS type 1 subfamily. In terms of assembly, monomer. Requires Zn(2+) as cofactor.

It localises to the cytoplasm. It carries out the reaction tRNA(Ile) + L-isoleucine + ATP = L-isoleucyl-tRNA(Ile) + AMP + diphosphate. Its function is as follows. Catalyzes the attachment of isoleucine to tRNA(Ile). As IleRS can inadvertently accommodate and process structurally similar amino acids such as valine, to avoid such errors it has two additional distinct tRNA(Ile)-dependent editing activities. One activity is designated as 'pretransfer' editing and involves the hydrolysis of activated Val-AMP. The other activity is designated 'posttransfer' editing and involves deacylation of mischarged Val-tRNA(Ile). The polypeptide is Isoleucine--tRNA ligase (ileS) (Staphylococcus aureus).